Consider the following 425-residue polypeptide: MASEERDGDVLLQLHPEEVVETDPQLPEEIERCSGLDYNDFFWRYMHKNIPVIIANVSNDWECQNWTVGQSSPESRDLNSNPSASSINFDYLKTKISDGPVPVANCNSSYFNSHTKLELNFHDYLAKWRSSIESQSSAAWTSAEVNSNVAPASGDNLYLKDWHLAAQMPGYNFYKVPKYFASDWLNEQLIQQGKDDYRFVYMGPKNSWTSYHADVFGSFSWSTNIVGLKKWLIMPPGEELKLNDRLGNLPFSIDEKMLDEHNVRYYTINQRANEAVFVPSGWFHQVWNLTDTISVNHNWFNGCNISMVWQNLKNNLKAVCNEISDCQQMDNFEAHCQTMLRASFGINYLDFIELLEFIAARRLAEGTVATKFLLFDSYTMNDYHVQYDLECLWKITRTLTEDPTIQCSPLQLEDRCQGLLARLEF.

The 152-residue stretch at 165 to 316 folds into the JmjC domain; sequence AAQMPGYNFY…MVWQNLKNNL (152 aa). Positions 212, 214, and 284 each coordinate Fe cation.

The protein belongs to the JMJD6 family. Requires Fe(2+) as cofactor.

It localises to the nucleus. Its subcellular location is the cytoplasm. The catalysed reaction is L-lysyl-[protein] + 2-oxoglutarate + O2 = 4-hydroxy-L-lysyl-[protein] + succinate + CO2. In terms of biological role, catalyzes the 2-oxoglutarate and iron-dependent C4-lysyl hydroxylation of eRF1 thereby promoting the translational termination efficiency of eRF1. May be involved in regulation of chromatin structure, promoting expansion of heterochromatin. This chain is 2-oxoglutarate and iron-dependent oxygenase JMJD4 homolog, found in Drosophila melanogaster (Fruit fly).